An 873-amino-acid chain; its full sequence is MESMLTLAMEQPVKRNTLKKYKIACIVLLALLVIVSLGLGLGLGLRKPEKQGSCRKKCFDASFRGLENCRCDVACKDRGDCCWDFEDTCVESTRIWMCNQFRCGETRLEASLCSCSDDCLQRKDCCADYKSVCQGETSWLEENCDTAQQSQCPEGFDLPPVILFSMDGFRAEYLHTWDTLMPNINKLKTCGIHSKYMRAMYPTKTFPNHYTIVMGLYPESHGIIDNNMYDVNLNKNFSLSSKEQNNPAWWHGQPMWLTAMYQGLKAATYFWPGSEAAINGSFPSIYMPYNGSVPFEERISTLLKWLDLPKAERPRFYTMYFEEPDFSGHAGGPVSARVIKALQIVDHAFGMLMEGLKQRNLHNCVNIILLADHGMEQTYCNKMEYMTDYFPRINFYMYEGPAPRIRAHSIPHDFFSFNSEEIVRNLSCRKPDQHFKPYLTPDLPKRLHYAKNVRIDKVHLFVDRQWLAVRSKSNTNCGGGNHGYNNEFRSMEAIFLAHGPSFKEKTEVEPFENIEVYNLMCDLLRIQPAPNNGTHGSLNHLLKVPFYEPSHAEEVSKFSVCGFANPLPAESDCLCPHLQNSIQLEQVNQMLNLTQEEITATVKVNLPFGRPRVLQKNVDHCLLYHREYVSGFGKAMRMPMWSSYTVPQLGDTSPLPPTVPDCLRADVRVPPSESQKCSFYLADKNITHGFLYPPASNRTSDSQYDALITSNLVPMYEEFTKMWDYFHSVLLIKHATERNGVNVVSGPIFDYNYDGHFDAPDEITKHLANTDVPIPTHYFVVLTSCKNKSHTPENCPGWLDVLPFIIPHRPTNMESCPEGKPEALWVEERFTAHIARVRDVELLTGLDFYQEKVQPVSEILQLKTYLPTFETTI.

Residues 1 to 11 (MESMLTLAMEQ) lie on the Cytoplasmic side of the membrane. Residues 12–30 (PVKRNTLKKYKIACIVLLA) form a helical; Signal-anchor for type II membrane protein membrane-spanning segment. Topologically, residues 31–873 (LLVIVSLGLG…TYLPTFETTI (843 aa)) are extracellular. 2 SMB domains span residues 51–93 (QGSC…VEST) and 94–138 (RIWM…GETS). Disulfide bonds link Cys-54/Cys-71, Cys-58/Cys-89, Cys-69/Cys-82, Cys-75/Cys-81, Cys-98/Cys-115, Cys-103/Cys-133, Cys-113/Cys-126, Cys-119/Cys-125, Cys-144/Cys-190, and Cys-152/Cys-364. The short motif at 78 to 80 (RGD) is the Cell attachment site element. The segment at 160–544 (PVILFSMDGF…HGSLNHLLKV (385 aa)) is phosphodiesterase. Residue Asp-167 coordinates Zn(2+). Lys-204 lines the ATP pocket. Thr-205 is a binding site for Zn(2+). Residue Thr-205 is the Nucleophile of the active site. Asn-226 serves as a coordination point for ATP. Asn-236 is a glycosylation site (N-linked (GlcNAc...) asparagine). Glu-275 is an ATP binding site. Asn-279 carries an N-linked (GlcNAc...) asparagine glycan. Tyr-289 contributes to the ATP binding site. The N-linked (GlcNAc...) asparagine glycan is linked to Asn-290. Zn(2+) is bound by residues Asp-325, His-329, Asp-372, and His-373. Intrachain disulfides connect Cys-380–Cys-477, Cys-428–Cys-816, Cys-561–Cys-621, Cys-573–Cys-677, Cys-575–Cys-662, and Cys-785–Cys-795. Asn-425 carries an N-linked (GlcNAc...) asparagine glycan. His-482 contributes to the Zn(2+) binding site. N-linked (GlcNAc...) asparagine glycosylation is found at Asn-532, Asn-592, Asn-685, and Asn-697. Residues 580 to 873 (NSIQLEQVNQ…TYLPTFETTI (294 aa)) are nuclease. Ca(2+)-binding residues include Asp-750, Asn-752, Asp-754, His-756, and Asp-758. A glycan (N-linked (GlcNAc...) asparagine) is linked at Asn-787.

As to quaternary structure, monomer and homodimer. It depends on Zn(2+) as a cofactor. In terms of processing, N-glycosylated. N-glycosylation is necessary for normal transport to the cell membrane, but is not the apical targeting signal.

It is found in the cell membrane. The protein localises to the apical cell membrane. The protein resides in the secreted. The enzyme catalyses a ribonucleoside 5'-triphosphate + H2O = a ribonucleoside 5'-phosphate + diphosphate + H(+). It carries out the reaction ATP + H2O = AMP + diphosphate + H(+). It catalyses the reaction CTP + H2O = CMP + diphosphate + H(+). The catalysed reaction is GTP + H2O = GMP + diphosphate + H(+). The enzyme catalyses UTP + H2O = UMP + diphosphate + H(+). It carries out the reaction UDP-N-acetyl-alpha-D-glucosamine + H2O = N-acetyl-alpha-D-glucosamine 1-phosphate + UMP + 2 H(+). It catalyses the reaction P(1),P(3)-bis(5'-adenosyl) triphosphate + H2O = AMP + ADP + 2 H(+). The catalysed reaction is P(1),P(4)-bis(5'-adenosyl) tetraphosphate + H2O = AMP + ATP + 2 H(+). The enzyme catalyses P(1),P(5)-bis(5'-adenosyl) pentaphosphate + H2O = adenosine 5'-tetraphosphate + AMP + 2 H(+). It carries out the reaction P(1),P(4)-bis(5'-guanosyl) tetraphosphate + H2O = GMP + GTP + 2 H(+). It catalyses the reaction Hydrolytically removes 5'-nucleotides successively from the 3'-hydroxy termini of 3'-hydroxy-terminated oligonucleotides.. Its function is as follows. Hydrolase that metabolizes extracellular nucleotides, including ATP, GTP, UTP and CTP. Limits mast cells and basophils response during inflammation and during the chronic phases of allergic responses by eliminating extracellular ATP, a signaling molecule activating these cells in an autocrine manner. Metabolizes extracellular ATP in the lumen of the small intestine, and thereby prevents ATP-induced apoptosis of intestinal plasmacytoid dendritic cells. Has a broad specificity and can also hydrolyze UDP-GlcNAc into UMP and GlcNAc-1-phosphate and potentially several other intracellular nucleotide sugars, including UDP-GalNAc, CMP-NeuAc, GDP-Fuc, and UDP-GlcA. Thereby, could modulate glycan biosynthesis and protein glycosylation. Can hydrolyze extracellular dinucleoside polyphosphates, including the vasoactive adenosine polyphosphates as well. In addition, displays an alkaline phosphodiesterase activity in vitro. The protein is Ectonucleotide pyrophosphatase/phosphodiesterase family member 3 of Pongo abelii (Sumatran orangutan).